The chain runs to 469 residues: MNIGRIVQVIGPVIDVVFEEGQLPAILNAITITNPVINDEEDNLIVEVAQHLGDNNVRCIAMDVTDGLVRGMPAKDTGAPITVPVGKECLGRILNVVGKPVDGLGPIEAKNTMPIHREAPSFLEQDTSVHVLETGVKVIDLLVPFPRGGKMGLFGGAGCGKTVVMMEMIHNIAMHHGGISVFAGVGERTREGNDLYREMLESGVIKQAALIYGQMTEPPGARARVSLTALAAAEYFRDVEGQDVLLFVDNIFRFTQAGSEVSALLGRMPSAVGYQPTLATDLGELQERITSTDKGSITAVQCVYVPADDLTDPAPATTFAHLDGTVVLSRPIAELGIYPAVDPLDSTSRILDPIVLGEEHYKVARAVQVTLQKYKDLQDIIAILGMDELSEEDKLTVNRARKIQRFLSQPFFVAAQFTGVDGKFVSVPDTVRGFKEILEGKYDDLPEQAFYMVGGIEEAVEKAKKYQEQ.

155–162 (GGAGCGKT) provides a ligand contact to ATP.

This sequence belongs to the ATPase alpha/beta chains family. F-type ATPases have 2 components, CF(1) - the catalytic core - and CF(0) - the membrane proton channel. CF(1) has five subunits: alpha(3), beta(3), gamma(1), delta(1), epsilon(1). CF(0) has three main subunits: a(1), b(2) and c(9-12). The alpha and beta chains form an alternating ring which encloses part of the gamma chain. CF(1) is attached to CF(0) by a central stalk formed by the gamma and epsilon chains, while a peripheral stalk is formed by the delta and b chains.

It localises to the cell inner membrane. The enzyme catalyses ATP + H2O + 4 H(+)(in) = ADP + phosphate + 5 H(+)(out). Functionally, produces ATP from ADP in the presence of a proton gradient across the membrane. The catalytic sites are hosted primarily by the beta subunits. This is ATP synthase subunit beta from Syntrophus aciditrophicus (strain SB).